Reading from the N-terminus, the 476-residue chain is MLGYEVVIGFETHAQLSTQSKIFSRAATAFGAEPNTQACAVDLALPGTLPVMNRGAVERAIQFALAIGAQVSPRSIFARKNYFYPDLPKGYQISQFEIPVVVGGEVEFYLDGEKRSVRLVRAHLEEDAGKSLHEDYVGQTGIDLNRAGTPLLEIVTEPDMRSSLEAVAYAKELHKIVTWIGICDGNMQEGSFRCDANVSVRKPGAPLGTRREVKNLNSFKFMQQAIDYEVRWQIEQLEDGHAIEQATVLFDPDSGETRSMRSKEDAADYRYFPDPDLPPLVIADDWVQRVRAEMTELPRVMAQRFVADYGLSDYDATALTQSHAIAAYFQAAAKACGQAKLASNWIMGDVARRLNTDEIDIAQSPVNAAQLGLLITRIVDGTLSNNAAKQVLDALWAGESPDVDAVIESKGLKQMNDSGALEKIVDDVLAANPKNIEQYKAGNSKALNALVGQIMKGSQGKANPQQVNDLLRKKLD.

This sequence belongs to the GatB/GatE family. GatB subfamily. As to quaternary structure, heterotrimer of A, B and C subunits.

It carries out the reaction L-glutamyl-tRNA(Gln) + L-glutamine + ATP + H2O = L-glutaminyl-tRNA(Gln) + L-glutamate + ADP + phosphate + H(+). The catalysed reaction is L-aspartyl-tRNA(Asn) + L-glutamine + ATP + H2O = L-asparaginyl-tRNA(Asn) + L-glutamate + ADP + phosphate + 2 H(+). Its function is as follows. Allows the formation of correctly charged Asn-tRNA(Asn) or Gln-tRNA(Gln) through the transamidation of misacylated Asp-tRNA(Asn) or Glu-tRNA(Gln) in organisms which lack either or both of asparaginyl-tRNA or glutaminyl-tRNA synthetases. The reaction takes place in the presence of glutamine and ATP through an activated phospho-Asp-tRNA(Asn) or phospho-Glu-tRNA(Gln). In Albidiferax ferrireducens (strain ATCC BAA-621 / DSM 15236 / T118) (Rhodoferax ferrireducens), this protein is Aspartyl/glutamyl-tRNA(Asn/Gln) amidotransferase subunit B.